Reading from the N-terminus, the 116-residue chain is uncharacterized protein (116 aa).

A CHY-type zinc finger spans residues 1-72 (MCKHVLNAQV…SDEYCPNCDN (72 aa)). Positions 2, 4, 16, 17, 23, 26, 27, 33, 45, 48, 67, and 70 each coordinate Zn(2+).

Its subcellular location is the cytoplasm. This is an uncharacterized protein from Schizosaccharomyces pombe (strain 972 / ATCC 24843) (Fission yeast).